The chain runs to 356 residues: Chorismate synthase (356 aa).

NADP(+) is bound by residues R48 and R54. FMN-binding positions include 125 to 127, 237 to 238, G281, 296 to 300, and R322; these read RSS, NA, and KPTSS.

Belongs to the chorismate synthase family. In terms of assembly, homotetramer. FMNH2 is required as a cofactor.

It catalyses the reaction 5-O-(1-carboxyvinyl)-3-phosphoshikimate = chorismate + phosphate. The protein operates within metabolic intermediate biosynthesis; chorismate biosynthesis; chorismate from D-erythrose 4-phosphate and phosphoenolpyruvate: step 7/7. In terms of biological role, catalyzes the anti-1,4-elimination of the C-3 phosphate and the C-6 proR hydrogen from 5-enolpyruvylshikimate-3-phosphate (EPSP) to yield chorismate, which is the branch point compound that serves as the starting substrate for the three terminal pathways of aromatic amino acid biosynthesis. This reaction introduces a second double bond into the aromatic ring system. The chain is Chorismate synthase from Novosphingobium aromaticivorans (strain ATCC 700278 / DSM 12444 / CCUG 56034 / CIP 105152 / NBRC 16084 / F199).